We begin with the raw amino-acid sequence, 226 residues long: Cytidylate kinase (226 aa).

10-18 (GPASSGKST) serves as a coordination point for ATP.

It belongs to the cytidylate kinase family. Type 1 subfamily.

It localises to the cytoplasm. It carries out the reaction CMP + ATP = CDP + ADP. The enzyme catalyses dCMP + ATP = dCDP + ADP. The protein is Cytidylate kinase of Streptococcus equi subsp. equi (strain 4047).